The following is a 139-amino-acid chain: Nucleoside diphosphate kinase (139 aa).

Residues Lys-10, Phe-58, Arg-86, Thr-92, Arg-104, and Asn-114 each coordinate ATP. His-117 acts as the Pros-phosphohistidine intermediate in catalysis.

The protein belongs to the NDK family. As to quaternary structure, homotetramer. Mg(2+) serves as cofactor.

The protein resides in the cytoplasm. It catalyses the reaction a 2'-deoxyribonucleoside 5'-diphosphate + ATP = a 2'-deoxyribonucleoside 5'-triphosphate + ADP. It carries out the reaction a ribonucleoside 5'-diphosphate + ATP = a ribonucleoside 5'-triphosphate + ADP. Major role in the synthesis of nucleoside triphosphates other than ATP. The ATP gamma phosphate is transferred to the NDP beta phosphate via a ping-pong mechanism, using a phosphorylated active-site intermediate. This Rhodococcus jostii (strain RHA1) protein is Nucleoside diphosphate kinase.